A 914-amino-acid chain; its full sequence is Chlorate reductase subunit alpha (914 aa).

A signal peptide (tat-type signal) is located at residues 1–32 (MNSPDEHNGRRRFLQFSAAALASAAASPSLWA). The 4Fe-4S Mo/W bis-MGD-type domain maps to 62–125 (DSVGVMTHSN…VYCSWSKQPD (64 aa)). Residues His-69, Cys-73, Cys-77, and Cys-111 each coordinate [4Fe-4S] cluster. Asp-205 provides a ligand contact to Mo-bis(molybdopterin guanine dinucleotide).

This sequence belongs to the prokaryotic molybdopterin-containing oxidoreductase family. As to quaternary structure, heterotrimer of alpha, beta and gamma subunits. Requires [4Fe-4S] cluster as cofactor. Mo-bis(molybdopterin guanine dinucleotide) is required as a cofactor. Post-translationally, predicted to be exported by the Tat system. The position of the signal peptide cleavage has not been experimentally proven.

Its subcellular location is the periplasm. It catalyses the reaction chlorate + AH2 = chlorite + A + H2O. Terminal reductase that allows anaerobic growth on chlorate as the sole respiratory oxidant. The polypeptide is Chlorate reductase subunit alpha (clrA) (Ideonella dechloratans).